Reading from the N-terminus, the 748-residue chain is tRNA endonuclease ANKZF1 (748 aa).

The C2H2-type zinc finger occupies 96–120; it reads LFCSACDQIFQNHQEQREHYKLDWH. The segment at 135–185 is disordered; the sequence is SASDFEQQSSTGDLSSISGSDDTDSSSEEDLLPLDEGRAESEKPNRPPGFY. Residues 143–154 show a composition bias toward low complexity; sequence SSTGDLSSISGS. Residues 155–167 are compositionally biased toward acidic residues; sequence DDTDSSSEEDLLP. The span at 169 to 179 shows a compositional bias: basic and acidic residues; sequence DEGRAESEKPN. In terms of domain architecture, VLRF1 spans 227 to 370; it reads GPRYYVVLMA…QRVLHKLTTL (144 aa). The active site involves glutamine 270. Serine 282 and serine 385 each carry phosphoserine. Positions 383–408 are enriched in basic and acidic residues; sequence FHSPETHWKPVREERKKDTEKEKTKV. Disordered regions lie at residues 383–438 and 460–497; these read FHSP…SEVE and RRRR…TQEV. Residues 429-438 are compositionally biased toward acidic residues; sequence SQEEDGSEVE. Over residues 484-497 the composition is skewed to polar residues; that stretch reads QPQDEPFSQPTQEV. Residues 515–545 form an ANK 1 repeat; it reads ELWDTLLAACRAGEVEVLKLQLATGLVDPGV. Serine 555 carries the post-translational modification Phosphoserine. The ANK 2 repeat unit spans residues 556–585; sequence GGFTLLHAAAAAGRGLVVRLLLEAGADPTV. Residues 621 to 677 form a disordered region; that stretch reads KARVPGPLTQEMEARQATRKKEQKAARRQREQQQRKQREQEEQEQEEQRRFAALSDR. A coiled-coil region spans residues 628-681; the sequence is LTQEMEARQATRKKEQKAARRQREQQQRKQREQEEQEQEEQRRFAALSDREKRA. Threonine 629 is modified (phosphothreonine). Basic and acidic residues predominate over residues 632 to 677; sequence MEARQATRKKEQKAARRQREQQQRKQREQEEQEQEEQRRFAALSDR. Residues 654 to 666 form a VCP/p97-interacting motif (VIM) region; the sequence is QRKQREQEEQEQE. Residue serine 702 is modified to Phosphoserine.

This sequence belongs to the ANKZF1/VMS1 family. In terms of assembly, interacts (via VIM motif) with VCP.

Its subcellular location is the cytoplasm. Endonuclease that cleaves polypeptidyl-tRNAs downstream of the ribosome-associated quality control (RQC) pathway to release incompletely synthesized polypeptides for degradation. The RQC pathway disassembles aberrantly stalled translation complexes to recycle or degrade the constituent parts. ANKZF1 acts downstream disassembly of stalled ribosomes and specifically cleaves off the terminal 3'-CCA nucleotides universal to all tRNAs from polypeptidyl-tRNAs, releasing (1) ubiquitinated polypeptides from 60S ribosomal subunit for degradation and (2) cleaved tRNAs. ANKZF1-cleaved tRNAs are then repaired and recycled by ELAC1 and TRNT1. Also plays a role in the cellular response to hydrogen peroxide and in the maintenance of mitochondrial integrity under conditions of cellular stress. This chain is tRNA endonuclease ANKZF1, found in Mus musculus (Mouse).